The primary structure comprises 167 residues: Inclusion membrane protein G (167 aa).

The next 2 helical transmembrane spans lie at 33–57 and 63–88; these read VVLALSLFAVFASGSLSILSAAVLF and VLPYLLILTTALLGCVYAVIVLLRSL. A sufficient for interaction with human 14-3-3 beta protein region spans residues 94–167; the sequence is SCKKRSPEEI…DNSRSRSRSF (74 aa). Residues 97–167 form a disordered region; the sequence is KRSPEEIEGA…DNSRSRSRSF (71 aa). Over residues 122–135 the composition is skewed to low complexity; that stretch reads ESASPQASPTSSTL. Residues 161–166 carry the Phosphorylation-dependent binding motif motif; the sequence is RSRSRS. A Phosphoserine modification is found at S166.

In terms of assembly, in infected HeLa cells colocalizes with host 14-3-3 protein (YWHAB); phosphorylation of Ser-166 is probably required. Interacts with Pkn1. Post-translationally, phosphorylated, possibly at more than one position, in infected HeLa cells. Phosphorylated by chlamydial kinase Pnk1.

The protein localises to the secreted. It localises to the host vacuole. The protein resides in the host pathogen-containing vacuole. Its subcellular location is the host pathogen-containing vacuole membrane. Inclusion membrane protein probably involved in early modification events of the chlamydial inclusion. The chain is Inclusion membrane protein G from Chlamydia trachomatis serovar L2 (strain ATCC VR-902B / DSM 19102 / 434/Bu).